The chain runs to 197 residues: Pyridoxal 5'-phosphate synthase subunit PdxT (197 aa).

52 to 54 (GES) contributes to the L-glutamine binding site. The active-site Nucleophile is the cysteine 84. L-glutamine contacts are provided by residues arginine 116 and 143–144 (IR). Active-site charge relay system residues include histidine 179 and glutamate 181.

It belongs to the glutaminase PdxT/SNO family. In terms of assembly, in the presence of PdxS, forms a dodecamer of heterodimers. Only shows activity in the heterodimer.

The catalysed reaction is aldehydo-D-ribose 5-phosphate + D-glyceraldehyde 3-phosphate + L-glutamine = pyridoxal 5'-phosphate + L-glutamate + phosphate + 3 H2O + H(+). It catalyses the reaction L-glutamine + H2O = L-glutamate + NH4(+). The protein operates within cofactor biosynthesis; pyridoxal 5'-phosphate biosynthesis. Catalyzes the hydrolysis of glutamine to glutamate and ammonia as part of the biosynthesis of pyridoxal 5'-phosphate. The resulting ammonia molecule is channeled to the active site of PdxS. The protein is Pyridoxal 5'-phosphate synthase subunit PdxT of Ignicoccus hospitalis (strain KIN4/I / DSM 18386 / JCM 14125).